The following is a 280-amino-acid chain: Four and a half LIM domains protein 1 (280 aa).

At serine 2 the chain carries N-acetylserine. N6-acetyllysine is present on lysine 4. The C4-type zinc-finger motif lies at 7 to 31; it reads CHYCRDPLQGKKYVQKDGRHCCLKC. LIM zinc-binding domains follow at residues 40–92, 101–153, 162–212, and 221–276; these read CVDC…CNKC, CKGC…CVTC, CVKC…CVDC, and CAGC…CPDC. Lysine 86 participates in a covalent cross-link: Glycyl lysine isopeptide (Lys-Gly) (interchain with G-Cter in SUMO2).

Isoform 1 seems to be most abundant in each tissue and isoform 2 much less abundant. Isoform 1 is highly expressed in skeletal muscle and lung, and to a lesser extent in heart, brain and kidney. Isoform 2 was found in brain, lung kidney and genital organs.

The protein localises to the cytoplasm. It is found in the nucleus. Its function is as follows. May have an involvement in muscle development or hypertrophy. Isoform 2 binds to RBP-J and plays a negative regulatory role in the RBP-J-mediated transcription in mammalian systems. This Mus musculus (Mouse) protein is Four and a half LIM domains protein 1 (Fhl1).